We begin with the raw amino-acid sequence, 286 residues long: MTAQNIDGKAIAQAIRTKLKDKVTARKEAGQRVPGLAVILVGADPASQVYVGSKRRACEELGFISRSYDLDSSTSEDALLSLIDECNEDQSIDGILVQLPLPEHIEESKVIERIRPDKDVDGFHPYNVGRLAQRIPVLRSCTPMGIMTLIQSTGVDTYGLDAVVVGASNIVGRPMSLELLLAGCTTTTCHRFTRNLEQKVRQADLVVVAVGKPGFIPGEWIKPGAIVIDVGINRLESGQLVGDVQFEKAAENASFITPVPGGVGPMTIASLLENTLYACEQYHDHD.

Residues 166–168 (GAS) and Ile232 each bind NADP(+).

Belongs to the tetrahydrofolate dehydrogenase/cyclohydrolase family. In terms of assembly, homodimer.

It carries out the reaction (6R)-5,10-methylene-5,6,7,8-tetrahydrofolate + NADP(+) = (6R)-5,10-methenyltetrahydrofolate + NADPH. It catalyses the reaction (6R)-5,10-methenyltetrahydrofolate + H2O = (6R)-10-formyltetrahydrofolate + H(+). The protein operates within one-carbon metabolism; tetrahydrofolate interconversion. Its function is as follows. Catalyzes the oxidation of 5,10-methylenetetrahydrofolate to 5,10-methenyltetrahydrofolate and then the hydrolysis of 5,10-methenyltetrahydrofolate to 10-formyltetrahydrofolate. This chain is Bifunctional protein FolD, found in Shewanella piezotolerans (strain WP3 / JCM 13877).